The following is a 196-amino-acid chain: GTP cyclohydrolase-2 (196 aa).

Residue 49 to 53 (RVHSE) participates in GTP binding. Cys54, Cys65, and Cys67 together coordinate Zn(2+). Residues Gln70, 92–94 (EGR), and Thr114 each bind GTP. The active-site Proton acceptor is the Asp126. The active-site Nucleophile is the Arg128. The GTP site is built by Thr149 and Lys154.

It belongs to the GTP cyclohydrolase II family. Homodimer. Zn(2+) is required as a cofactor.

The catalysed reaction is GTP + 4 H2O = 2,5-diamino-6-hydroxy-4-(5-phosphoribosylamino)-pyrimidine + formate + 2 phosphate + 3 H(+). Its pathway is cofactor biosynthesis; riboflavin biosynthesis; 5-amino-6-(D-ribitylamino)uracil from GTP: step 1/4. Catalyzes the conversion of GTP to 2,5-diamino-6-ribosylamino-4(3H)-pyrimidinone 5'-phosphate (DARP), formate and pyrophosphate. This chain is GTP cyclohydrolase-2, found in Salmonella choleraesuis (strain SC-B67).